Consider the following 956-residue polypeptide: Bromodomain testis-specific protein (956 aa).

In terms of domain architecture, Bromo 1 spans 26 to 132; it reads RLTNQLQFLQ…KLFMQKLSQM (107 aa). Ser-186 carries the phosphoserine modification. Positions 208–219 match the Nuclear localization signal motif; sequence KGVKRRADTTTP. Positions 210–239 are disordered; the sequence is VKRRADTTTPTTSIAKASSESPPTLRETKP. Residues 216–231 show a composition bias toward polar residues; that stretch reads TTTPTTSIAKASSESP. In terms of domain architecture, Bromo 2 spans 266–375; that stretch reads VKVTEQLKHC…DVFELHFAKI (110 aa). Disordered stretches follow at residues 391 to 420, 442 to 508, 607 to 747, and 859 to 934; these read NSAQALSRESSSEASSGDASSEDSEDERVQ, VPLR…PMNY, NQLN…HSQQ, and LEHN…RREA. Over residues 392-409 the composition is skewed to low complexity; that stretch reads SAQALSRESSSEASSGDA. The stretch at 417–442 forms a coiled coil; sequence ERVQHLAKLQEQLNAVHQQLQVLSQV. Positions 445 to 463 are enriched in basic residues; sequence RKLKKKNEKSKRAPKRKKV. In terms of domain architecture, NET spans 496–578; the sequence is KSEEEDNAKP…ACLRKRSLKP (83 aa). Residues 625 to 640 show a composition bias toward pro residues; it reads PPPPPPPPPPPPPPPE. Positions 649–688 are enriched in low complexity; the sequence is DSSSSSGSGSGSSSSSSGSSSSSSSSGSASSSSDSSSSDS. A compositionally biased stretch (polar residues) spans 714-724; it reads KQIQSSVQDIT. The stretch at 844–940 forms a coiled coil; sequence EKEVKARTQE…RREAMAGTID (97 aa). Composition is skewed to basic and acidic residues over residues 859–874 and 915–934; these read LEHNAKDPKVSQENQR and LLKDRNLAREKEQERRRREA.

This sequence belongs to the BET family. Interacts with SMARCE1. Interacts with mRNA splicing machinery proteins SRSF2, DDX5, HNRNPK and TARDBP. Interacts with the acetylated N-terminus of histone H1, H2, H3 and H4. Interacts with P-TEFb components CDK9 and CCNT1/cyclin-T1. Ubiquitinated in a SPOP-dependent manner, leading to proteasomal degradation. In terms of tissue distribution, testis-specific. Expressed in germinal cells from the early meiotic (pachytene) spermatocytes and during spermiogenesis in the round and elongating spermatids until the condensed late spermatids. No expression seen in spermatogonia.

The protein resides in the nucleus. Functionally, testis-specific chromatin protein that specifically binds histone H4 acetylated at 'Lys-5' and 'Lys-8' (H4K5ac and H4K8ac, respectively) and plays a key role in spermatogenesis. Required in late pachytene spermatocytes: plays a role in meiotic and post-meiotic cells by binding to acetylated histones at the promoter of specific meiotic and post-meiotic genes, facilitating their activation at the appropriate time. In the post-meiotic phase of spermatogenesis, binds to hyperacetylated histones and participates in their general removal from DNA. Also recognizes and binds a subset of butyrylated histones: able to bind histone H4 butyrylated at 'Lys-8' (H4K8ac), while it is not able to bind H4 butyrylated at 'Lys-5' (H4K5ac). Also acts as a component of the splicing machinery in pachytene spermatocytes and round spermatids and participates in 3'-UTR truncation of specific mRNAs in post-meiotic spermatids. Required for chromocenter organization, a structure comprised of peri-centromeric heterochromatin. This is Bromodomain testis-specific protein (Brdt) from Mus musculus (Mouse).